Consider the following 158-residue polypeptide: Endoribonuclease YbeY (158 aa).

Zn(2+) contacts are provided by His-124, His-128, and His-134.

Belongs to the endoribonuclease YbeY family. The cofactor is Zn(2+).

It localises to the cytoplasm. Its function is as follows. Single strand-specific metallo-endoribonuclease involved in late-stage 70S ribosome quality control and in maturation of the 3' terminus of the 16S rRNA. This Caldicellulosiruptor saccharolyticus (strain ATCC 43494 / DSM 8903 / Tp8T 6331) protein is Endoribonuclease YbeY.